Reading from the N-terminus, the 150-residue chain is MKCPFCNFEESKVVDSRATDDNTTIRRRRECLNCNKRYTTYEKIEDFPVLVVKKDLARENFNKEKIINGLIIACQKRPVSRKQIEDIAYEIEKSISNRMVTEIASKDIGEMVMDKLKQVDEISYVRFASVYRQFKDINTFLEEIKNLVVN.

The segment at 3–34 (CPFCNFEESKVVDSRATDDNTTIRRRRECLNC) is a zinc-finger region. One can recognise an ATP-cone domain in the interval 49–139 (VLVVKKDLAR…VYRQFKDINT (91 aa)).

This sequence belongs to the NrdR family. Requires Zn(2+) as cofactor.

Its function is as follows. Negatively regulates transcription of bacterial ribonucleotide reductase nrd genes and operons by binding to NrdR-boxes. The polypeptide is Transcriptional repressor NrdR (Clostridium botulinum (strain Eklund 17B / Type B)).